A 770-amino-acid chain; its full sequence is Potassium transporter 25 (770 aa).

The Cytoplasmic portion of the chain corresponds to 1-23; the sequence is MDLEAAHGAAAAPGKRRRRARES. The helical transmembrane segment at 24–44 threads the bilayer; it reads WGASLLLAYQSLGVVYGDVAT. Residues 45–70 lie on the Extracellular side of the membrane; sequence SPLYVYKSAFAGDDIQHSAGNEEIYG. Residues 71-91 form a helical membrane-spanning segment; it reads VLSFVFWTLTLISLVKYVLIV. Residues 92 to 152 are Cytoplasmic-facing; that stretch reads LRADDGGEGG…MLERYRVLQR (61 aa). Residues 153 to 173 traverse the membrane as a helical segment; it reads LLLLFALLGTCMVIGDGVLTP. Over 174-194 the chain is Extracellular; that stretch reads AVSVYSAVSGLELSMEHEHHK. Residues 195–215 traverse the membrane as a helical segment; sequence YVQLPVTCAILIGLFALQHYG. Residues 216 to 218 are Cytoplasmic-facing; it reads THR. The chain crosses the membrane as a helical span at residues 219–239; it reads VGFIFAPIVCVWLLCISAIGV. Residues 240–267 are Extracellular-facing; it reads YNIVHWNHHVYRALSPYYMYQFLKKTQT. The chain crosses the membrane as a helical span at residues 268-288; it reads GGWMSLGGILLCVTGSEAMYA. At 289-299 the chain is on the cytoplasmic side; it reads DLGHFSQSSIK. Residues 300 to 320 form a helical membrane-spanning segment; sequence IAFMSVVYPALVLAYMGQAAY. At 321 to 346 the chain is on the extracellular side; that stretch reads ISQHHSFENAYHIGFYVSVPEKLRWP. A helical membrane pass occupies residues 347-367; the sequence is VLVIAILAAVVGSQAVITGTF. Residues 368–394 are Cytoplasmic-facing; sequence SIIKQCSSLSCFPGVKIVHTSSTVHGQ. The helical transmembrane segment at 395–415 threads the bilayer; that stretch reads IYIPEINWILMILCLAVTLGF. Residues 416–425 are Extracellular-facing; that stretch reads RNTKHLANAQ. A helical transmembrane segment spans residues 426 to 446; it reads GLAVITVMLVTTCLMSLVIVL. Residues 447–451 are Cytoplasmic-facing; the sequence is CWNKS. A helical membrane pass occupies residues 452–472; the sequence is IFLALGFLIFFGTIEVLYFSA. Residues 473 to 479 lie on the Extracellular side of the membrane; sequence SLVKFHE. A helical membrane pass occupies residues 480–500; it reads GAWVPITLSFIFMIVMCVWHY. The Cytoplasmic portion of the chain corresponds to 501–770; the sequence is GTIKKYEFDF…TLEVGMVYQV (270 aa).

It belongs to the HAK/KUP transporter (TC 2.A.72.3) family.

It localises to the membrane. In terms of biological role, high-affinity potassium transporter. The polypeptide is Potassium transporter 25 (HAK25) (Oryza sativa subsp. japonica (Rice)).